Here is a 316-residue protein sequence, read N- to C-terminus: HTH-type transcriptional regulator PecT (316 aa).

The HTH lysR-type domain maps to 11 to 68; sequence LDLDLLRTFVAVADLNTFAAAAVAVCRTQSAVSQQMQRLEQLIGKELFARHGRNKLLT. The H-T-H motif DNA-binding region spans 28 to 47; the sequence is FAAAAVAVCRTQSAVSQQMQ. Residues 293–316 form a disordered region; it reads LPVSTGTESELREPPTDESLKDIT. Positions 301–316 are enriched in basic and acidic residues; that stretch reads SELREPPTDESLKDIT.

Belongs to the LysR transcriptional regulatory family.

In terms of biological role, regulates pectinase gene expression. The protein is HTH-type transcriptional regulator PecT (pecT) of Dickeya dadantii (strain 3937) (Erwinia chrysanthemi (strain 3937)).